A 64-amino-acid polypeptide reads, in one-letter code: Large ribosomal subunit protein bL35 (64 aa).

Over residues 1–22 (MPKMKSHTGMGKRVRVTGKGKI) the composition is skewed to basic residues. Residues 1-28 (MPKMKSHTGMGKRVRVTGKGKIVKQQAG) form a disordered region.

It belongs to the bacterial ribosomal protein bL35 family.

The sequence is that of Large ribosomal subunit protein bL35 from Salinispora tropica (strain ATCC BAA-916 / DSM 44818 / JCM 13857 / NBRC 105044 / CNB-440).